The chain runs to 146 residues: MGFTQQQEALVNSSWESFKQNPSYSVLFYTIILEKAPAAKGMFSFLKDSAGVVDSPKLQAHAEQVFGMVRDSAIQLQATGEVVLKNGSLGAIHIQKGVVDPHFVVVKEALLKTIKEASGDKWSEELSIAWEVAYDGLATAIKKAMS.

One can recognise a Globin domain in the interval 2-146 (GFTQQQEALV…LATAIKKAMS (145 aa)). Residues Tyr24 and Tyr29 each carry the nitrated tyrosine modification. Heme b is bound at residue Ser44. Ser44 bears the Phosphoserine mark. His61 is an O2 binding site. Residues His93 and Lys96 each contribute to the heme b site. Tyr134 is subject to Nitrated tyrosine.

This sequence belongs to the plant globin family. In terms of assembly, monomer. Nitrated in effective nodules and particularly in hypoxic conditions; this mechanism may play a protective role in the symbiosis by buffering toxic peroxynitrite NO(2)(-). Nitration level decrease during nodule senescence. Post-translationally, phosphorylation at Ser-44 disrupts the molecular environment of its porphyrin ring oxygen binding pocket, thus leading to a reduced oxygen consumption and to the delivery of oxygen O(2) to symbiosomes. As to expression, accumulates in root nodules after inoculation by bacteria of the genus Rhizobium.

The protein localises to the cytoplasm. It localises to the cytosol. Its subcellular location is the nucleus. Functionally, leghemoglobin that reversibly binds oxygen O(2) through a pentacoordinated heme iron. In root nodules, facilitates the diffusion of oxygen to the bacteroids while preventing the bacterial nitrogenase from being inactivated by buffering dioxygen, nitric oxide and carbon monoxide, and promoting the formation of reactive oxygen species (ROS, e.g. H(2)O(2)). This role is essential for symbiotic nitrogen fixation (SNF). The polypeptide is Leghemoglobin 49 (Vicia faba (Broad bean)).